Here is a 226-residue protein sequence, read N- to C-terminus: UPF0758 protein Spy49_0870 (226 aa).

One can recognise an MPN domain in the interval 103 to 225 (SVLTSVQVAE…YYSFREKSTL (123 aa)). Zn(2+)-binding residues include histidine 174, histidine 176, and aspartate 187. The JAMM motif motif lies at 174 to 187 (HNHPSGNIEPSSND).

It belongs to the UPF0758 family.

The protein is UPF0758 protein Spy49_0870 of Streptococcus pyogenes serotype M49 (strain NZ131).